The following is a 1122-amino-acid chain: TSET complex member tstF (1122 aa).

A compositionally biased stretch (low complexity) spans 88 to 126 (SSSASGINGTNNNNSGSNSSNNNNNNNGSLSNSPNNNNN). 2 disordered regions span residues 88-131 (SSSA…AFIG) and 178-215 (QTLH…STNS). Residues 178 to 190 (QTLHNRSPNNTIK) are compositionally biased toward polar residues. Residues 191-215 (LSPNSSNNDSLNNNNNNINNNSTNS) show a composition bias toward low complexity. WD repeat units lie at residues 298–337 (FENK…IEKQ), 342–381 (PKGT…LATQ), and 383–422 (SKVH…EVSK). The disordered stretch occupies residues 731–775 (NGSVGGSSSNNSANSNNSNNNNNNNNNNSNNSNNNNNSSQPILEP).

In terms of assembly, component of the TSET complex, a heterohexamer composed of tstA, tstB, tstC, tstD, tstE and tstF, which may act in plasma membrane turnover. tstA, tstB, tstC and tstD are likely to be the core complex members with tstE and tstF acting as associated scaffold proteins.

In Dictyostelium discoideum (Social amoeba), this protein is TSET complex member tstF.